The primary structure comprises 303 residues: Putative F-box protein At5g62060 (303 aa).

The 48-residue stretch at 27–74 folds into the F-box domain; the sequence is KSRYIDIPLDITVEILKKLPAKSLVRFQCVSKQWSTIIGSRRDFIDSI.

This chain is Putative F-box protein At5g62060, found in Arabidopsis thaliana (Mouse-ear cress).